Here is a 1220-residue protein sequence, read N- to C-terminus: Plasma membrane calcium-transporting ATPase 3 (1220 aa).

Residues 1–20 (MGDMANSSIEFHPKPQQQRD) are compositionally biased toward polar residues. Positions 1–23 (MGDMANSSIEFHPKPQQQRDVPQ) are disordered. Topologically, residues 1–97 (MGDMANSSIE…NFIPPKQPKT (97 aa)) are cytoplasmic. Ser8 carries the post-translational modification Phosphoserine. A helical transmembrane segment spans residues 98 to 118 (FLQLVWEALQDVTLIILEVAA). Over 119-155 (IVSLGLSFYAPPGEESEACGNVSGGAEDEGEAEAGWI) the chain is Extracellular. The helical transmembrane segment at 156–176 (EGAAILLSVICVVLVTAFNDW) threads the bilayer. At 177-364 (SKEKQFRGLQ…KEKSVLQGKL (188 aa)) the chain is on the cytoplasmic side. The tract at residues 298-355 (EEEKKDKKGKQQDGAMESSQTKAKKQDGAVAMEMQPLKSAEGGEMEEREKKKANAPKK) is disordered. Composition is skewed to basic and acidic residues over residues 299-308 (EEKKDKKGKQ) and 342-355 (MEER…APKK). The chain crosses the membrane as a helical span at residues 365–384 (TKLAVQIGKAGLVMSAITVI). Residues 385–417 (ILVLYFVIETFVVEGRTWLAECTPVYVQYFVKF) are Extracellular-facing. A helical membrane pass occupies residues 418 to 435 (FIIGVTVLVVAVPEGLPL). At 436-849 (AVTISLAYSV…MWGRNVYDSI (414 aa)) the chain is on the cytoplasmic side. Asp473 acts as the 4-aspartylphosphate intermediate in catalysis. Residues Asp794 and Asp798 each coordinate Mg(2+). The helical transmembrane segment at 850-869 (SKFLQFQLTVNVVAVIVAFT) threads the bilayer. At 870–879 (GACITQDSPL) the chain is on the extracellular side. Residues 880–900 (KAVQMLWVNLIMDTFASLALA) traverse the membrane as a helical segment. Residues 901 to 920 (TEPPTESLLLRKPYGRDKPL) lie on the Cytoplasmic side of the membrane. A helical transmembrane segment spans residues 921-943 (ISRTMMKNILGHAVYQLAIIFTL). The Extracellular segment spans residues 944-961 (LFVGELFFDIDSGRNAPL). A helical transmembrane segment spans residues 962–983 (HSPPSEHYTIIFNTFVMMQLFN). Topologically, residues 984 to 1002 (EINARKIHGERNVFDGIFS) are cytoplasmic. A helical membrane pass occupies residues 1003-1024 (NPIFCTIVLGTFGIQIVIVQFG). At 1025–1034 (GKPFSCSPLS) the chain is on the extracellular side. A helical transmembrane segment spans residues 1035 to 1056 (TEQWLWCLFVGVGELVWGQVIA). Over 1057–1220 (TIPTSQLKCL…SPLHSVETSL (164 aa)) the chain is Cytoplasmic. Thr1079 bears the Phosphothreonine mark. Residues 1097 to 1114 (LRRGQILWFRGLNRIQTQ) form a calmodulin-binding subdomain A region. Thr1113 is modified (phosphothreonine; by PKC). Residues 1115–1124 (IRVVKAFRSS) are calmodulin-binding subdomain B. Residues 1166 to 1186 (ENEERLRAPPPPSPNQNNNAI) form a disordered region.

It belongs to the cation transport ATPase (P-type) (TC 3.A.3) family. Type IIB subfamily. Interacts with PDZD11. Interacts (via N-terminus) with YWHAE. In terms of tissue distribution, highly expressed in the cerebellum. Expressed in adrenal glands.

It localises to the cell membrane. It is found in the presynaptic cell membrane. It carries out the reaction Ca(2+)(in) + ATP + H2O = Ca(2+)(out) + ADP + phosphate + H(+). With respect to regulation, down-regulated by YWHAE. Its function is as follows. ATP-driven Ca(2+) ion pump involved in the maintenance of basal intracellular Ca(2+) levels at the presynaptic terminals. Uses ATP as an energy source to transport cytosolic Ca(2+) ions across the plasma membrane to the extracellular compartment. May counter-transport protons, but the mechanism and the stoichiometry of this Ca(2+)/H(+) exchange remains to be established. This Homo sapiens (Human) protein is Plasma membrane calcium-transporting ATPase 3.